The primary structure comprises 429 residues: Enolase (429 aa).

Q167 lines the (2R)-2-phosphoglycerate pocket. The Proton donor role is filled by E209. Positions 246, 289, and 316 each coordinate Mg(2+). (2R)-2-phosphoglycerate is bound by residues K341, R370, S371, and K392. K341 functions as the Proton acceptor in the catalytic mechanism.

Belongs to the enolase family. In terms of assembly, component of the RNA degradosome, a multiprotein complex involved in RNA processing and mRNA degradation. Mg(2+) serves as cofactor.

It localises to the cytoplasm. Its subcellular location is the secreted. It is found in the cell surface. It carries out the reaction (2R)-2-phosphoglycerate = phosphoenolpyruvate + H2O. Its pathway is carbohydrate degradation; glycolysis; pyruvate from D-glyceraldehyde 3-phosphate: step 4/5. Its function is as follows. Catalyzes the reversible conversion of 2-phosphoglycerate (2-PG) into phosphoenolpyruvate (PEP). It is essential for the degradation of carbohydrates via glycolysis. The chain is Enolase from Cellvibrio japonicus (strain Ueda107) (Pseudomonas fluorescens subsp. cellulosa).